We begin with the raw amino-acid sequence, 927 residues long: Calmodulin-binding transcription activator CBT (927 aa).

A DNA-binding region (CG-1) is located at residues Tyr26–Met152. A necessary and sufficient for nuclear localization region spans residues Leu70–Gln96. A Nuclear localization signal motif is present at residues Asp72–Phe79. An ANK repeat occupies Ser609–Leu638. 2 consecutive IQ domains span residues Glu757–His786 and Met799–Ile828. Positions Val826–Gly845 are calmodulin-binding. The interval Glu830–Pro851 is necessary and sufficient for nuclear localization. An IQ 3 domain is found at Phe882–Glu911.

The protein belongs to the CAMTA family.

Its subcellular location is the nucleus. Its activity is regulated as follows. Transcriptional activation activity is strongly reduced by calmodulin. Transcription activator that binds calmodulin in a calcium-dependent manner in vitro. Binds to the DNA consensus sequence 5'-T[AC]CG[CT]GT[GT][GT][GT][GT]T[GT]CG-3'. In Oryza sativa subsp. japonica (Rice), this protein is Calmodulin-binding transcription activator CBT.